Here is a 308-residue protein sequence, read N- to C-terminus: ADP-L-glycero-D-manno-heptose-6-epimerase (308 aa).

NADP(+) is bound by residues 10–11, 31–32, Lys38, Lys53, 75–79, and Asn92; these read FI, DN, and EGACS. The Proton acceptor role is filled by Tyr139. Lys143 contacts NADP(+). Asn168 is a substrate binding site. 2 residues coordinate NADP(+): Val169 and Lys177. The Proton acceptor role is filled by Lys177. Residues Ser179, His186, 200–203, Arg208, and Tyr271 contribute to the substrate site; that span reads FAGS.

This sequence belongs to the NAD(P)-dependent epimerase/dehydratase family. HldD subfamily. As to quaternary structure, homopentamer. The cofactor is NADP(+).

It carries out the reaction ADP-D-glycero-beta-D-manno-heptose = ADP-L-glycero-beta-D-manno-heptose. Its pathway is nucleotide-sugar biosynthesis; ADP-L-glycero-beta-D-manno-heptose biosynthesis; ADP-L-glycero-beta-D-manno-heptose from D-glycero-beta-D-manno-heptose 7-phosphate: step 4/4. Functionally, catalyzes the interconversion between ADP-D-glycero-beta-D-manno-heptose and ADP-L-glycero-beta-D-manno-heptose via an epimerization at carbon 6 of the heptose. The chain is ADP-L-glycero-D-manno-heptose-6-epimerase from Haemophilus influenzae (strain PittGG).